A 176-amino-acid polypeptide reads, in one-letter code: Probable chorismate pyruvate-lyase (176 aa).

Substrate is bound by residues Arg70, Leu108, and Glu166.

It belongs to the UbiC family.

It is found in the cytoplasm. It catalyses the reaction chorismate = 4-hydroxybenzoate + pyruvate. The protein operates within cofactor biosynthesis; ubiquinone biosynthesis. In terms of biological role, removes the pyruvyl group from chorismate, with concomitant aromatization of the ring, to provide 4-hydroxybenzoate (4HB) for the ubiquinone pathway. The protein is Probable chorismate pyruvate-lyase of Dechloromonas aromatica (strain RCB).